Consider the following 433-residue polypeptide: Lipase 2 (433 aa).

Positions 165-167 match the Involved in the stabilization of the negatively charged intermediate by the formation of the oxyanion hole motif; the sequence is HGG. The active-site Charge relay system is serine 239. Residues aspartate 361 and histidine 391 contribute to the active site.

It belongs to the 'GDXG' lipolytic enzyme family.

The catalysed reaction is a triacylglycerol + H2O = a diacylglycerol + a fatty acid + H(+). The chain is Lipase 2 (lip2) from Moraxella sp. (strain TA144).